A 584-amino-acid polypeptide reads, in one-letter code: A-type ATP synthase subunit A (584 aa).

234–241 (GPFGSGKT) provides a ligand contact to ATP.

The protein belongs to the ATPase alpha/beta chains family. Has multiple subunits with at least A(3), B(3), C, D, E, F, H, I and proteolipid K(x).

It is found in the cell membrane. The catalysed reaction is ATP + H2O + 4 H(+)(in) = ADP + phosphate + 5 H(+)(out). Functionally, component of the A-type ATP synthase that produces ATP from ADP in the presence of a proton gradient across the membrane. The A chain is the catalytic subunit. The polypeptide is A-type ATP synthase subunit A (Methanoculleus marisnigri (strain ATCC 35101 / DSM 1498 / JR1)).